A 307-amino-acid chain; its full sequence is HTH-type transcriptional regulator DmlR (307 aa).

Positions 5 to 62 (PLLNDLRVFMLVARRAGFAAVAEELGVSPAFVSKRIALLEQTLNVVLLHRTTRRVTIT) constitute an HTH lysR-type domain. The H-T-H motif DNA-binding region spans 22-41 (FAAVAEELGVSPAFVSKRIA).

The protein belongs to the LysR transcriptional regulatory family.

Transcriptional regulator required for the aerobic growth on D-malate as the sole carbon source. Induces the expression of dmlA in response to D-malate or L- or meso-tartrate. Negatively regulates its own expression. The sequence is that of HTH-type transcriptional regulator DmlR (dmlR) from Escherichia coli (strain K12).